Consider the following 286-residue polypeptide: 4-diphosphocytidyl-2-C-methyl-D-erythritol kinase (286 aa).

Residue Lys13 is part of the active site. 99 to 109 (PMGGGLGGGSS) serves as a coordination point for ATP. Residue Asp141 is part of the active site.

It belongs to the GHMP kinase family. IspE subfamily.

The catalysed reaction is 4-CDP-2-C-methyl-D-erythritol + ATP = 4-CDP-2-C-methyl-D-erythritol 2-phosphate + ADP + H(+). The protein operates within isoprenoid biosynthesis; isopentenyl diphosphate biosynthesis via DXP pathway; isopentenyl diphosphate from 1-deoxy-D-xylulose 5-phosphate: step 3/6. Functionally, catalyzes the phosphorylation of the position 2 hydroxy group of 4-diphosphocytidyl-2C-methyl-D-erythritol. This Herminiimonas arsenicoxydans protein is 4-diphosphocytidyl-2-C-methyl-D-erythritol kinase.